A 470-amino-acid polypeptide reads, in one-letter code: Cysteine--tRNA ligase (470 aa).

Cysteine 46 provides a ligand contact to Zn(2+). The 'HIGH' region signature appears at 48-58 (PTVYDLAHIGN). Zn(2+) is bound by residues cysteine 230, histidine 255, and glutamate 259. Residues 288-292 (KMSKS) carry the 'KMSKS' region motif. Lysine 291 provides a ligand contact to ATP.

Belongs to the class-I aminoacyl-tRNA synthetase family. In terms of assembly, monomer. The cofactor is Zn(2+).

The protein localises to the cytoplasm. The enzyme catalyses tRNA(Cys) + L-cysteine + ATP = L-cysteinyl-tRNA(Cys) + AMP + diphosphate. This chain is Cysteine--tRNA ligase, found in Granulibacter bethesdensis (strain ATCC BAA-1260 / CGDNIH1).